Reading from the N-terminus, the 419-residue chain is Transcription termination factor Rho (419 aa).

In terms of domain architecture, Rho RNA-BD spans G48–H123. Residues G169–A174, K181–V186, and R212 each bind ATP.

The protein belongs to the Rho family. As to quaternary structure, homohexamer. The homohexamer assembles into an open ring structure.

In terms of biological role, facilitates transcription termination by a mechanism that involves Rho binding to the nascent RNA, activation of Rho's RNA-dependent ATPase activity, and release of the mRNA from the DNA template. This Neisseria gonorrhoeae protein is Transcription termination factor Rho.